We begin with the raw amino-acid sequence, 76 residues long: Alpha/kappa-conotoxin-like pl14.1 (76 aa).

The N-terminal stretch at 1–27 is a signal peptide; the sequence is MPSVRSVTCCCLLWMMLSVQLVTPGSP. Residues 28 to 39 constitute a propeptide that is removed on maturation; sequence ATAQLSGQRTAR. Disulfide bonds link cysteine 46/cysteine 61 and cysteine 50/cysteine 63. Asparagine 64 bears the Asparagine amide mark. The propeptide occupies 65 to 76; that stretch reads GKRDVVSSSMAV.

Belongs to the conotoxin J superfamily. Expressed by the venom duct.

The protein resides in the secreted. In terms of biological role, highly inhibits both nicotinic acetylcholine receptors (neuronal (alpha-3/beta-4) and muscular (alpha-1/beta-1/epsilon/delta) subtypes) and the voltage-gated potassium channel Kv1.6/KCNA6 subtype. The protein is Alpha/kappa-conotoxin-like pl14.1 of Conus planorbis (Planorbis cone).